The primary structure comprises 244 residues: Ribonuclease PH (244 aa).

Phosphate is bound by residues Arg86 and 124–126 (GTR).

It belongs to the RNase PH family. Homohexameric ring arranged as a trimer of dimers.

The catalysed reaction is tRNA(n+1) + phosphate = tRNA(n) + a ribonucleoside 5'-diphosphate. Its function is as follows. Phosphorolytic 3'-5' exoribonuclease that plays an important role in tRNA 3'-end maturation. Removes nucleotide residues following the 3'-CCA terminus of tRNAs; can also add nucleotides to the ends of RNA molecules by using nucleoside diphosphates as substrates, but this may not be physiologically important. Probably plays a role in initiation of 16S rRNA degradation (leading to ribosome degradation) during starvation. The polypeptide is Ribonuclease PH (Oceanobacillus iheyensis (strain DSM 14371 / CIP 107618 / JCM 11309 / KCTC 3954 / HTE831)).